The following is a 656-amino-acid chain: MAFTLRRAFCHMSVFWMPGAVVALKIHPANNVQKAVRDCLRVWFCSLQPDLFRVRFYHAYCKSFHSENGNDLHPVGEPWFSQAQVWNQPEQTLKNEDEEMLSRRLNSFASFEEVLSFIHTLDTLPVTLASAALLRICEIGKRDDEQRLPKEVLENRVFQALCLRCERDPSHLTNAVLVTVLQSLVIDPQSSLVLSLVAECQRRLRRGSLEVHHLCVLGESLARLQGASCEILKLVICQLQSENLETFAPEDIVSVYRILQACPEEVDKHQTFLNTVNNFSLSIVSYLSPKSISHVLTALVALDQTHARPLLIKLGKSVVRYIPRFTNEELRQVLEAFVYFGHSDRFFTEALEQHVAAQCFSLDPAVASSVMEYCSRKRILSKPIFDVVAEIFVCQSEKFSPSQISELIEPFGKLNYLPPNAPALFRKVENVLFAHLRHFPPKMLLRLLHSCSLIERHPVNFMSKIFSPFFLQRLQGKESYLDRLSLAQMTQLFLTSVLECPFYKGPKLLPKYQVKSFLTPCCSLETPMDLHLYKSVVIGLIDLLGSRLYFASKVLTPYYYTIDVEIKLDEDGFVLPFTVDEDVHTRVALCIDGPQRFCLGSKHLLGKEAIKQRHLRLLGYQVVQVPYHELELLTSRLELVDYLQRKLFSQSSTVHW.

Residues 587–645 form the RAP domain; that stretch reads VALCIDGPQRFCLGSKHLLGKEAIKQRHLRLLGYQVVQVPYHELELLTSRLELVDYLQR.

It belongs to the FAST kinase family.

It is found in the mitochondrion. Its function is as follows. Required for normal mitochondrial respiration. Increases steady-state levels and half-lives of a subset of mature mitochondrial mRNAs MT-ND2, MT-ND3, MT-CYTB, MT-CO2, and MT-ATP8/6. Promotes MT-CO1 mRNA translation and increases mitochondrial complex IV assembly and activity. In Rattus norvegicus (Rat), this protein is FAST kinase domain-containing protein 3, mitochondrial (Fastkd3).